Reading from the N-terminus, the 37-residue chain is Large ribosomal subunit protein bL36c (37 aa).

The protein belongs to the bacterial ribosomal protein bL36 family.

The protein resides in the plastid. Its subcellular location is the chloroplast. The chain is Large ribosomal subunit protein bL36c from Pelargonium hortorum (Common geranium).